The primary structure comprises 259 residues: Phosphatidylserine decarboxylase proenzyme (259 aa).

Catalysis depends on charge relay system; for autoendoproteolytic cleavage activity residues Asp86, His142, and Ser226. Ser226 serves as the catalytic Schiff-base intermediate with substrate; via pyruvic acid; for decarboxylase activity. Ser226 carries the pyruvic acid (Ser); by autocatalysis modification.

This sequence belongs to the phosphatidylserine decarboxylase family. PSD-B subfamily. Prokaryotic type I sub-subfamily. In terms of assembly, heterodimer of a large membrane-associated beta subunit and a small pyruvoyl-containing alpha subunit. The cofactor is pyruvate. Is synthesized initially as an inactive proenzyme. Formation of the active enzyme involves a self-maturation process in which the active site pyruvoyl group is generated from an internal serine residue via an autocatalytic post-translational modification. Two non-identical subunits are generated from the proenzyme in this reaction, and the pyruvate is formed at the N-terminus of the alpha chain, which is derived from the carboxyl end of the proenzyme. The autoendoproteolytic cleavage occurs by a canonical serine protease mechanism, in which the side chain hydroxyl group of the serine supplies its oxygen atom to form the C-terminus of the beta chain, while the remainder of the serine residue undergoes an oxidative deamination to produce ammonia and the pyruvoyl prosthetic group on the alpha chain. During this reaction, the Ser that is part of the protease active site of the proenzyme becomes the pyruvoyl prosthetic group, which constitutes an essential element of the active site of the mature decarboxylase.

The protein localises to the cell membrane. The catalysed reaction is a 1,2-diacyl-sn-glycero-3-phospho-L-serine + H(+) = a 1,2-diacyl-sn-glycero-3-phosphoethanolamine + CO2. It functions in the pathway phospholipid metabolism; phosphatidylethanolamine biosynthesis; phosphatidylethanolamine from CDP-diacylglycerol: step 2/2. Catalyzes the formation of phosphatidylethanolamine (PtdEtn) from phosphatidylserine (PtdSer). The chain is Phosphatidylserine decarboxylase proenzyme from Halalkalibacterium halodurans (strain ATCC BAA-125 / DSM 18197 / FERM 7344 / JCM 9153 / C-125) (Bacillus halodurans).